Consider the following 358-residue polypeptide: MREYKIAAIPADGIGPEVIAAGLQVLEALEKRSGDFSIHTETFDWGSDYYKKNGVMMPADGLEQLKKFDAIFFGAVGAPDVPDHITLWGLRLPICQGFDQYANVRPTKVLPGITPPLRNCGPGDLDWVIVRENSEGEYSGHGGRAHKGLPEEVGTEVAIFTRVGVTRIMRYAFKLAQARPRKLLTVVTKSNAQRHGMVMWDEIAAEVSKEFPDVTWDKMLVDAMTVRMTLKPQSLDTIVATNLHADILSDLAGALAGSLGVAPTANIDPERRFPSMFEPIHGSAFDITGKGIANPVATFWTAAQMLEHLGEKDAATRLMSAVERVTEAGILTPDVGGTANTQQVTDAVCEAIAGSNIL.

D222, D246, and D250 together coordinate Mn(2+).

The protein belongs to the isocitrate and isopropylmalate dehydrogenases family. It depends on Mg(2+) as a cofactor. The cofactor is Mn(2+). K(+) is required as a cofactor.

It localises to the cytoplasm. The enzyme catalyses tartrate + NAD(+) = 2-hydroxy-3-oxosuccinate + NADH + H(+). It catalyses the reaction (2R,3S)-tartrate + NAD(+) = 2-hydroxy-3-oxosuccinate + NADH + H(+). It carries out the reaction (2R,3R)-tartrate + NAD(+) = 2-hydroxy-3-oxosuccinate + NADH + H(+). The catalysed reaction is (2R,3R)-tartrate + H(+) = (R)-glycerate + CO2. The enzyme catalyses (R)-malate + NAD(+) = pyruvate + CO2 + NADH. It functions in the pathway carbohydrate acid metabolism; tartrate degradation; 2-hydroxy-3-oxosuccinate from L-tartrate: step 1/1. Its pathway is carbohydrate acid metabolism; tartrate degradation; 2-hydroxy-3-oxosuccinate from meso-tartrate: step 1/1. It participates in carbohydrate acid metabolism; tartrate degradation; D-glycerate from L-tartrate: step 1/1. In terms of biological role, has multiple catalytic activities. Apart from catalyzing the oxidation of (+)-tartrate to oxaloglycolate, also converts meso-tartrate to D-glycerate and catalyzes the oxidative decarboxylation of D-malate to pyruvate. In Agrobacterium vitis (Rhizobium vitis), this protein is Probable tartrate dehydrogenase/decarboxylase TtuC' (ttuC').